The chain runs to 125 residues: NADH dehydrogenase [ubiquinone] 1 beta subcomplex subunit 8, mitochondrial (125 aa).

The transit peptide at 1–29 (MAGRLSGVASRIMGGNGVVARSVGSSLRQ) directs the protein to the mitochondrion. The chain crosses the membrane as a helical span at residues 78–98 (ALAWLSGGLGFFVGLGLLAVL).

It belongs to the complex I NDUFB8 subunit family. Complex I is composed of at least 49 different subunits.

The protein resides in the mitochondrion inner membrane. Accessory subunit of the mitochondrial membrane respiratory chain NADH dehydrogenase (Complex I), that is believed not to be involved in catalysis. Complex I functions in the transfer of electrons from NADH to the respiratory chain. The immediate electron acceptor for the enzyme is believed to be ubiquinone. In Arabidopsis thaliana (Mouse-ear cress), this protein is NADH dehydrogenase [ubiquinone] 1 beta subcomplex subunit 8, mitochondrial.